The primary structure comprises 135 residues: Large ribosomal subunit protein eL32 (135 aa).

It belongs to the eukaryotic ribosomal protein eL32 family. As to quaternary structure, component of the large ribosomal subunit.

It is found in the cytoplasm. Component of the large ribosomal subunit. The ribosome is a large ribonucleoprotein complex responsible for the synthesis of proteins in the cell. The polypeptide is Large ribosomal subunit protein eL32 (rpl32) (Ictalurus punctatus (Channel catfish)).